Here is a 460-residue protein sequence, read N- to C-terminus: Putative arginine/ornithine antiporter (460 aa).

Topologically, residues 1-4 (MEKK) are cytoplasmic. The helical transmembrane segment at 5 to 25 (LGLSALTALVLSSMLGAGVFS) threads the bilayer. Over 26 to 38 (LPQNMAAVASPAA) the chain is Periplasmic. The chain crosses the membrane as a helical span at residues 39–59 (LLIGWGITGAGILLLAFAMLI). Topologically, residues 60–92 (LTRIRPELDGGIFTYAREGFGELIGFCSAWGYW) are cytoplasmic. The helical transmembrane segment at 93-113 (LCAVIANVSYLVIVFSALSFF) threads the bilayer. The Periplasmic portion of the chain corresponds to 114-125 (TDTPELRLFGDG). Residues 126–146 (NTWQSIVGASALLWIVHFLIL) traverse the membrane as a helical segment. Over 147-157 (RGVQTAASINL) the chain is Cytoplasmic. A helical transmembrane segment spans residues 158–178 (VATLAKLLPLGLFVVLAMMMF). The Periplasmic portion of the chain corresponds to 179 to 201 (KLDTFKLDFTGLALGVPVWEQVK). A helical transmembrane segment spans residues 202 to 222 (NTMLITLWVFIGVEGAVVVSA). Residues 223-235 (RARNKRDVGKATL) are Cytoplasmic-facing. Residues 236–256 (LAVLSALGVYLLVTLLSLGVV) form a helical membrane-spanning segment. The Periplasmic portion of the chain corresponds to 257–282 (ARPELAEIRNPSMAGLMVEMMGPWGE). The helical transmembrane segment at 283 to 303 (IIIAAGLIVSVCGAYLSWTIM) threads the bilayer. The Cytoplasmic portion of the chain corresponds to 304–331 (AAEVPFLAATHKAFPRIFARQNAQAAPS). Residues 332–352 (ASLWLTNICVQICLVLIWLTG) traverse the membrane as a helical segment. Topologically, residues 353-357 (SDYNT) are periplasmic. Residues 358–378 (LLTIASEMILVPYFLVGAFLL) traverse the membrane as a helical segment. At 379–384 (KIATRP) the chain is on the cytoplasmic side. A run of 2 helical transmembrane segments spans residues 385–405 (LHKA…YASG) and 406–426 (PMHL…FLYA). Residues 427 to 439 (RKTHTHDNVLNRQ) lie on the Cytoplasmic side of the membrane. A helical membrane pass occupies residues 440-460 (EMVLIGMLLIASVPATWMLVG).

This sequence belongs to the amino acid-polyamine-organocation (APC) superfamily. Basic amino acid/polyamine antiporter (APA) (TC 2.A.3.2) family.

The protein localises to the cell inner membrane. The enzyme catalyses L-ornithine(in) + L-arginine(out) = L-ornithine(out) + L-arginine(in). Catalyzes electroneutral exchange between arginine and ornithine to allow high-efficiency energy conversion in the arginine deiminase pathway. This chain is Putative arginine/ornithine antiporter (ydgI), found in Escherichia coli O6:H1 (strain CFT073 / ATCC 700928 / UPEC).